The primary structure comprises 125 residues: Acidic phospholipase A2 HTe (125 aa).

Cystine bridges form between cysteine 11-cysteine 77, cysteine 27-cysteine 124, cysteine 29-cysteine 45, cysteine 44-cysteine 105, cysteine 51-cysteine 98, cysteine 61-cysteine 91, and cysteine 84-cysteine 96. Ca(2+) is bound by residues tyrosine 28, glycine 30, and glycine 32. Histidine 48 is a catalytic residue. A Ca(2+)-binding site is contributed by aspartate 49. Residue aspartate 99 is part of the active site.

This sequence belongs to the phospholipase A2 family. Group I subfamily. D49 sub-subfamily. The cofactor is Ca(2+). In terms of processing, no glycosylation was detected on this protein. In terms of tissue distribution, expressed by the venom gland.

The protein localises to the secreted. The enzyme catalyses a 1,2-diacyl-sn-glycero-3-phosphocholine + H2O = a 1-acyl-sn-glycero-3-phosphocholine + a fatty acid + H(+). In terms of biological role, snake venom phospholipase A2 (PLA2) that blocks neuromuscular transmission, but that does not produce blockade by virtue of a selective action on nerve endings. Instead, the toxin acts both on nerve and on muscle. PLA2 catalyzes the calcium-dependent hydrolysis of the 2-acyl groups in 3-sn-phosphoglycerides. This chain is Acidic phospholipase A2 HTe, found in Notechis scutatus scutatus (Mainland tiger snake).